The following is a 388-amino-acid chain: uncharacterized protein (388 aa).

Its subcellular location is the mitochondrion. This is an uncharacterized protein from Dictyostelium citrinum (Slime mold).